Here is a 562-residue protein sequence, read N- to C-terminus: Cytosolic invertase 1 (562 aa).

It belongs to the glycosyl hydrolase 100 family.

It is found in the cytoplasm. Its subcellular location is the cytosol. It carries out the reaction Hydrolysis of terminal non-reducing beta-D-fructofuranoside residues in beta-D-fructofuranosides.. Cytosolic invertase that cleaves sucrose into glucose and fructose and is involved in the regulation of primary root elongation, lateral root formation, floral transition and pollen development. This chain is Cytosolic invertase 1, found in Oryza sativa subsp. japonica (Rice).